A 185-amino-acid polypeptide reads, in one-letter code: Large ribosomal subunit protein uL5 (185 aa).

This sequence belongs to the universal ribosomal protein uL5 family. As to quaternary structure, part of the 50S ribosomal subunit; part of the 5S rRNA/L5/L18/L25 subcomplex. Contacts the 5S rRNA and the P site tRNA. Forms a bridge to the 30S subunit in the 70S ribosome.

In terms of biological role, this is one of the proteins that bind and probably mediate the attachment of the 5S RNA into the large ribosomal subunit, where it forms part of the central protuberance. In the 70S ribosome it contacts protein S13 of the 30S subunit (bridge B1b), connecting the 2 subunits; this bridge is implicated in subunit movement. Contacts the P site tRNA; the 5S rRNA and some of its associated proteins might help stabilize positioning of ribosome-bound tRNAs. The chain is Large ribosomal subunit protein uL5 from Bacteroides fragilis (strain ATCC 25285 / DSM 2151 / CCUG 4856 / JCM 11019 / LMG 10263 / NCTC 9343 / Onslow / VPI 2553 / EN-2).